A 353-amino-acid polypeptide reads, in one-letter code: Photosystem II protein D1 (353 aa).

Residue T2 is modified to N-acetylthreonine. T2 is modified (phosphothreonine). 3 consecutive transmembrane segments (helical) span residues 29–46, 118–133, and 142–156; these read YIGW…TATS, HFLL…EWEL, and WIAV…AATA. Residue H118 participates in chlorophyll a binding. Y126 contributes to the pheophytin a binding site. [CaMn4O5] cluster contacts are provided by D170 and E189. Residues 197 to 218 traverse the membrane as a helical segment; that stretch reads FHMLGVAGVFGGSLFSAMHGSL. H198 lines the chlorophyll a pocket. A quinone contacts are provided by residues H215 and 264–265; that span reads SF. Position 215 (H215) interacts with Fe cation. Position 272 (H272) interacts with Fe cation. The helical transmembrane segment at 274-288 threads the bilayer; that stretch reads FLAAWPVVGIWFTAL. The [CaMn4O5] cluster site is built by H332, E333, D342, and A344. Positions 345 to 353 are excised as a propeptide; sequence ALEVPSLNG.

It belongs to the reaction center PufL/M/PsbA/D family. In terms of assembly, PSII is composed of 1 copy each of membrane proteins PsbA, PsbB, PsbC, PsbD, PsbE, PsbF, PsbH, PsbI, PsbJ, PsbK, PsbL, PsbM, PsbT, PsbX, PsbY, PsbZ, Psb30/Ycf12, at least 3 peripheral proteins of the oxygen-evolving complex and a large number of cofactors. It forms dimeric complexes. The cofactor is The D1/D2 heterodimer binds P680, chlorophylls that are the primary electron donor of PSII, and subsequent electron acceptors. It shares a non-heme iron and each subunit binds pheophytin, quinone, additional chlorophylls, carotenoids and lipids. D1 provides most of the ligands for the Mn4-Ca-O5 cluster of the oxygen-evolving complex (OEC). There is also a Cl(-1) ion associated with D1 and D2, which is required for oxygen evolution. The PSII complex binds additional chlorophylls, carotenoids and specific lipids.. In terms of processing, tyr-161 forms a radical intermediate that is referred to as redox-active TyrZ, YZ or Y-Z. C-terminally processed by CTPA; processing is essential to allow assembly of the oxygen-evolving complex and thus photosynthetic growth.

It localises to the plastid. Its subcellular location is the chloroplast thylakoid membrane. It carries out the reaction 2 a plastoquinone + 4 hnu + 2 H2O = 2 a plastoquinol + O2. Photosystem II (PSII) is a light-driven water:plastoquinone oxidoreductase that uses light energy to abstract electrons from H(2)O, generating O(2) and a proton gradient subsequently used for ATP formation. It consists of a core antenna complex that captures photons, and an electron transfer chain that converts photonic excitation into a charge separation. The D1/D2 (PsbA/PsbD) reaction center heterodimer binds P680, the primary electron donor of PSII as well as several subsequent electron acceptors. This Oryza nivara (Indian wild rice) protein is Photosystem II protein D1.